A 977-amino-acid chain; its full sequence is Leucine--tRNA ligase (977 aa).

The 'HIGH' region motif lies at 11–21 (PYVNGYLHLGH). Residues 220-318 (VFYVYELYSL…EYYNTKVETQ (99 aa)) are insert. Residues 699–703 (KMSKS) carry the 'KMSKS' region motif. Lysine 702 is an ATP binding site.

The protein belongs to the class-I aminoacyl-tRNA synthetase family.

It localises to the cytoplasm. It catalyses the reaction tRNA(Leu) + L-leucine + ATP = L-leucyl-tRNA(Leu) + AMP + diphosphate. The polypeptide is Leucine--tRNA ligase (leuS) (Nanoarchaeum equitans (strain Kin4-M)).